We begin with the raw amino-acid sequence, 414 residues long: Trafficking protein particle complex subunit 13 (414 aa).

This sequence belongs to the TRAPPC13 family. As to quaternary structure, part of the multisubunit TRAPP (transport protein particle) complex.

This chain is Trafficking protein particle complex subunit 13 (trappc13), found in Xenopus laevis (African clawed frog).